We begin with the raw amino-acid sequence, 257 residues long: uncharacterized protein (257 aa).

The helical transmembrane segment at 6-26 (IFWLNLAAIIIISIVVSGGMF) threads the bilayer.

Belongs to the staphylococcal tandem lipoprotein family.

Its subcellular location is the cell membrane. This is an uncharacterized protein from Staphylococcus aureus (strain Mu50 / ATCC 700699).